We begin with the raw amino-acid sequence, 528 residues long: Glucose-6-phosphate isomerase (528 aa).

The Proton donor role is filled by Glu322. Residues His351 and Lys455 contribute to the active site.

The protein belongs to the GPI family.

The protein resides in the cytoplasm. The catalysed reaction is alpha-D-glucose 6-phosphate = beta-D-fructose 6-phosphate. It functions in the pathway carbohydrate biosynthesis; gluconeogenesis. The protein operates within carbohydrate degradation; glycolysis; D-glyceraldehyde 3-phosphate and glycerone phosphate from D-glucose: step 2/4. Catalyzes the reversible isomerization of glucose-6-phosphate to fructose-6-phosphate. This chain is Glucose-6-phosphate isomerase, found in Synechococcus elongatus (strain ATCC 33912 / PCC 7942 / FACHB-805) (Anacystis nidulans R2).